We begin with the raw amino-acid sequence, 445 residues long: UPF0210 protein SPJ_0248 (445 aa).

The protein belongs to the UPF0210 family. In terms of assembly, homodimer.

In Streptococcus pneumoniae (strain JJA), this protein is UPF0210 protein SPJ_0248.